A 368-amino-acid polypeptide reads, in one-letter code: Protein RecA (368 aa).

Glycine 80 to threonine 87 contacts ATP. The span at asparagine 344–serine 353 shows a compositional bias: polar residues. The disordered stretch occupies residues asparagine 344 to leucine 368. The segment covering glutamate 354–leucine 368 has biased composition (acidic residues).

This sequence belongs to the RecA family.

It localises to the cytoplasm. Its function is as follows. Can catalyze the hydrolysis of ATP in the presence of single-stranded DNA, the ATP-dependent uptake of single-stranded DNA by duplex DNA, and the ATP-dependent hybridization of homologous single-stranded DNAs. It interacts with LexA causing its activation and leading to its autocatalytic cleavage. In Mannheimia haemolytica (Pasteurella haemolytica), this protein is Protein RecA.